The primary structure comprises 615 residues: Glutamine--fructose-6-phosphate aminotransferase [isomerizing] (615 aa).

The active-site Nucleophile; for GATase activity is Cys-2. The Glutamine amidotransferase type-2 domain maps to 2–220; sequence CGIVGYVGPQ…QDQVVELRRD (219 aa). 2 SIS domains span residues 287–427 and 460–605; these read IPPG…VRGT and LARS…VDQP. Lys-610 functions as the For Fru-6P isomerization activity in the catalytic mechanism.

In terms of assembly, homodimer.

It is found in the cytoplasm. It carries out the reaction D-fructose 6-phosphate + L-glutamine = D-glucosamine 6-phosphate + L-glutamate. In terms of biological role, catalyzes the first step in hexosamine metabolism, converting fructose-6P into glucosamine-6P using glutamine as a nitrogen source. This chain is Glutamine--fructose-6-phosphate aminotransferase [isomerizing], found in Streptomyces coelicolor (strain ATCC BAA-471 / A3(2) / M145).